We begin with the raw amino-acid sequence, 241 residues long: Octanoyltransferase (241 aa).

The region spanning 43–228 (AETPDEIWLV…CLTANLDGSP (186 aa)) is the BPL/LPL catalytic domain. Substrate contacts are provided by residues 83-90 (RGGQITYH), 159-161 (ALG), and 172-174 (GVS). Cysteine 190 serves as the catalytic Acyl-thioester intermediate.

This sequence belongs to the LipB family.

It is found in the cytoplasm. It carries out the reaction octanoyl-[ACP] + L-lysyl-[protein] = N(6)-octanoyl-L-lysyl-[protein] + holo-[ACP] + H(+). It participates in protein modification; protein lipoylation via endogenous pathway; protein N(6)-(lipoyl)lysine from octanoyl-[acyl-carrier-protein]: step 1/2. Its function is as follows. Catalyzes the transfer of endogenously produced octanoic acid from octanoyl-acyl-carrier-protein onto the lipoyl domains of lipoate-dependent enzymes. Lipoyl-ACP can also act as a substrate although octanoyl-ACP is likely to be the physiological substrate. The chain is Octanoyltransferase from Paraburkholderia xenovorans (strain LB400).